Reading from the N-terminus, the 425-residue chain is Serine--tRNA ligase (425 aa).

Disordered regions lie at residues Gln-43–Pro-68 and Leu-108–Trp-131. Basic and acidic residues predominate over residues Pro-117–Trp-131. Position 233 to 235 (Thr-233 to Glu-235) interacts with L-serine. Arg-264–Glu-266 is an ATP binding site. Residue Glu-287 coordinates L-serine. Glu-351–Ser-354 is an ATP binding site. Ser-385 contacts L-serine.

This sequence belongs to the class-II aminoacyl-tRNA synthetase family. Type-1 seryl-tRNA synthetase subfamily. In terms of assembly, homodimer. The tRNA molecule binds across the dimer.

It is found in the cytoplasm. It catalyses the reaction tRNA(Ser) + L-serine + ATP = L-seryl-tRNA(Ser) + AMP + diphosphate + H(+). The catalysed reaction is tRNA(Sec) + L-serine + ATP = L-seryl-tRNA(Sec) + AMP + diphosphate + H(+). The protein operates within aminoacyl-tRNA biosynthesis; selenocysteinyl-tRNA(Sec) biosynthesis; L-seryl-tRNA(Sec) from L-serine and tRNA(Sec): step 1/1. In terms of biological role, catalyzes the attachment of serine to tRNA(Ser). Is also able to aminoacylate tRNA(Sec) with serine, to form the misacylated tRNA L-seryl-tRNA(Sec), which will be further converted into selenocysteinyl-tRNA(Sec). This Prochlorococcus marinus (strain MIT 9303) protein is Serine--tRNA ligase.